Reading from the N-terminus, the 449-residue chain is Allantoinase (449 aa).

6 residues coordinate Zn(2+): histidine 61, histidine 63, lysine 148, histidine 184, histidine 240, and aspartate 313. Lysine 148 carries the post-translational modification N6-carboxylysine.

This sequence belongs to the metallo-dependent hydrolases superfamily. Allantoinase family. Homotetramer. Requires Zn(2+) as cofactor. Carboxylation allows a single lysine to coordinate two zinc ions.

The catalysed reaction is (S)-allantoin + H2O = allantoate + H(+). The protein operates within nitrogen metabolism; (S)-allantoin degradation; allantoate from (S)-allantoin: step 1/1. In terms of biological role, catalyzes the conversion of allantoin (5-ureidohydantoin) to allantoic acid by hydrolytic cleavage of the five-member hydantoin ring. The chain is Allantoinase from Desulfitobacterium hafniense (strain Y51).